The primary structure comprises 392 residues: LL-diaminopimelate aminotransferase (392 aa).

Positions 15, 40, 104, 128, and 178 each coordinate substrate. Pyridoxal 5'-phosphate-binding positions include 103 to 104 (SK), Tyr-128, Asn-178, Tyr-209, and 237 to 239 (SVS). Lys-240 is modified (N6-(pyridoxal phosphate)lysine). Residue Arg-248 participates in pyridoxal 5'-phosphate binding. Substrate is bound at residue Arg-366.

The protein belongs to the class-I pyridoxal-phosphate-dependent aminotransferase family. LL-diaminopimelate aminotransferase subfamily. Homodimer. The cofactor is pyridoxal 5'-phosphate.

The catalysed reaction is (2S,6S)-2,6-diaminopimelate + 2-oxoglutarate = (S)-2,3,4,5-tetrahydrodipicolinate + L-glutamate + H2O + H(+). It participates in amino-acid biosynthesis; L-lysine biosynthesis via DAP pathway; LL-2,6-diaminopimelate from (S)-tetrahydrodipicolinate (aminotransferase route): step 1/1. In terms of biological role, involved in the synthesis of meso-diaminopimelate (m-DAP or DL-DAP), required for both lysine and peptidoglycan biosynthesis. Catalyzes the direct conversion of tetrahydrodipicolinate to LL-diaminopimelate. This is LL-diaminopimelate aminotransferase from Desulforudis audaxviator (strain MP104C).